The primary structure comprises 656 residues: Nuclear pore complex protein Nup85 (656 aa).

Met-1 carries the post-translational modification N-acetylmethionine. Lys-92 carries the post-translational modification N6-acetyllysine. Residue Ser-223 is modified to Phosphoserine.

It belongs to the nucleoporin Nup85 family. Component of the nuclear pore complex (NPC). Component of the NPC Nup107-160 subcomplex, consisting of at least NUP107, NUP98/Nup96, NUP160, NUP133, NUP85, NUP37, NUP43 and SEC13. Interacts with NUP160, NUP133 and SEC13. Interacts with NUP37, NUP107 and NUP43. Interacts with CCR2.

It localises to the nucleus. Its subcellular location is the nuclear pore complex. The protein resides in the chromosome. It is found in the centromere. The protein localises to the kinetochore. It localises to the cytoplasm. Its subcellular location is the cytoskeleton. The protein resides in the spindle. It is found in the nucleus membrane. In terms of biological role, essential component of the nuclear pore complex (NPC) that seems to be required for NPC assembly and maintenance. As part of the NPC Nup107-160 subcomplex plays a role in RNA export and in tethering NUP96/Nup98 and NUP153 to the nucleus. The Nup107-160 complex seems to be required for spindle assembly during mitosis. NUP85 is required for membrane clustering of CCL2-activated CCR2. Seems to be involved in CCR2-mediated chemotaxis of monocytes and may link activated CCR2 to the phosphatidyl-inositol 3-kinase-Rac-lammellipodium protrusion cascade. Involved in nephrogenesis. This chain is Nuclear pore complex protein Nup85 (NUP85), found in Homo sapiens (Human).